A 332-amino-acid chain; its full sequence is RNA polymerase sigma-B factor (332 aa).

The Polymerase core binding motif lies at 125–138; that stretch reads DLIQEGALGLERGV. A DNA-binding region (H-T-H motif) is located at residues 294–313; that stretch reads LVQISQRMGISRERVRQVEK.

This sequence belongs to the sigma-70 factor family.

In terms of biological role, sigma factors are initiation factors that promote the attachment of RNA polymerase to specific initiation sites and are then released. This chain is RNA polymerase sigma-B factor (sigB), found in Nostoc sp. (strain PCC 7120 / SAG 25.82 / UTEX 2576).